Here is an 874-residue protein sequence, read N- to C-terminus: Alanine--tRNA ligase (874 aa).

Positions 564, 568, 665, and 669 each coordinate Zn(2+).

It belongs to the class-II aminoacyl-tRNA synthetase family. It depends on Zn(2+) as a cofactor.

Its subcellular location is the cytoplasm. It catalyses the reaction tRNA(Ala) + L-alanine + ATP = L-alanyl-tRNA(Ala) + AMP + diphosphate. Its function is as follows. Catalyzes the attachment of alanine to tRNA(Ala) in a two-step reaction: alanine is first activated by ATP to form Ala-AMP and then transferred to the acceptor end of tRNA(Ala). Also edits incorrectly charged Ser-tRNA(Ala) and Gly-tRNA(Ala) via its editing domain. This Burkholderia orbicola (strain MC0-3) protein is Alanine--tRNA ligase.